Consider the following 419-residue polypeptide: UPF0329 protein ECU07_1890/ECU10_0010 (419 aa).

The segment covering 136–165 (RQRKREEETERSVKELVGDEEKAKSKEEKA) has biased composition (basic and acidic residues). The tract at residues 136-222 (RQRKREEETE…KGGKKKSKGG (87 aa)) is disordered. A compositionally biased stretch (basic residues) spans 213-222 (KGGKKKSKGG).

Belongs to the UPF0329 family.

The polypeptide is UPF0329 protein ECU07_1890/ECU10_0010 (Encephalitozoon cuniculi (strain GB-M1) (Microsporidian parasite)).